An 89-amino-acid polypeptide reads, in one-letter code: Barrier-to-autointegration factor (89 aa).

Met1 carries the N-acetylmethionine modification. Thr2 bears the N-acetylthreonine; in Barrier-to-autointegration factor, N-terminally processed mark. A phosphothreonine; by VRK1 and VRK2 mark is found at Thr2 and Thr3. Ser4 carries the post-translational modification Phosphoserine; by VRK1 and VRK2. The HhH domain occupies 20–35 (VGSLAGIGDVLSKRLE).

Belongs to the BAF family. Homodimer. Heterodimerizes with BANF2. Interacts with ANKLE2/LEM4, leading to decreased phosphorylation by VRK1 and promoting dephosphorylation by protein phosphatase 2A (PP2A). Binds non-specifically to double-stranded DNA, and is found as a hexamer or dodecamer upon DNA binding. Binds to LEM domain-containing nuclear proteins such as LEMD3/MAN1, TMPO/LAP2 and EMD (emerin). Interacts with ANKLE1 (via LEM domain); the interaction may favor BANF1 dimerization. Interacts with CRX and LMNA (lamin-A). Binds linker histone H1.1 and core histones H3. Interacts with LEMD2 (via LEM domain). Interacts with PARP1; interaction takes place in response to oxidative DNA damage. Post-translationally, ser-4 is the major site of phosphorylation as compared to Thr-2 and Thr-3. Phosphorylation on Thr-2; Thr-3 and Ser-4 disrupts its ability to bind DNA and reduces its ability to bind LEM domain-containing proteins. Non phosphorylated BAF seems to enhance binding between EMD and LMNA. Dephosphorylated by protein phosphatase 2A (PP2A) following interaction with ANKLE2/LEM4 during mitotic exit, leading to mitotic nuclear envelope reassembly.

The protein resides in the nucleus. It localises to the chromosome. The protein localises to the nucleus envelope. Its subcellular location is the cytoplasm. Non-specific DNA-binding protein that plays key roles in mitotic nuclear reassembly, chromatin organization, DNA damage response, gene expression and intrinsic immunity against foreign DNA. Contains two non-specific double-stranded DNA (dsDNA)-binding sites which promote DNA cross-bridging. Plays a key role in nuclear membrane reformation at the end of mitosis by driving formation of a single nucleus in a spindle-independent manner. Transiently cross-bridges anaphase chromosomes via its ability to bridge distant DNA sites, leading to the formation of a dense chromatin network at the chromosome ensemble surface that limits membranes to the surface. Also acts as a negative regulator of innate immune activation by restricting CGAS activity toward self-DNA upon acute loss of nuclear membrane integrity. Outcompetes CGAS for DNA-binding, thereby preventing CGAS activation and subsequent damaging autoinflammatory responses. Also involved in DNA damage response: interacts with PARP1 in response to oxidative stress, thereby inhibiting the ADP-ribosyltransferase activity of PARP1. Involved in the recognition of exogenous dsDNA in the cytosol: associates with exogenous dsDNA immediately after its appearance in the cytosol at endosome breakdown and is required to avoid autophagy. This chain is Barrier-to-autointegration factor, found in Mus musculus (Mouse).